The chain runs to 222 residues: Glutathione S-transferase alpha-2 (222 aa).

In terms of domain architecture, GST N-terminal spans 3 to 83; that stretch reads GKPVLHYFNA…YIATKYDLYG (81 aa). An N6-succinyllysine modification is found at Lys4. Residues Tyr9, Lys45, 54–55, and 67–68 each bind glutathione; these read QV and QT. The GST C-terminal domain maps to 85-208; it reads DMKERALIDM…QPGSQRKPAM (124 aa).

Belongs to the GST superfamily. Alpha family. In terms of assembly, homodimer or heterodimer of GSTA1 and GSTA2.

Its subcellular location is the cytoplasm. The catalysed reaction is RX + glutathione = an S-substituted glutathione + a halide anion + H(+). In terms of biological role, catalyzes the conjugation of glutathione to a large variety of electrophilic compounds. In Rattus norvegicus (Rat), this protein is Glutathione S-transferase alpha-2 (Gsta2).